A 303-amino-acid polypeptide reads, in one-letter code: uncharacterized protein (303 aa).

Disordered regions lie at residues 1-89 (MTSP…NVRS) and 132-159 (SELP…STPR). The span at 61 to 89 (RASQSGYRPSDPLTTTRQSNPAPGANVRS) shows a compositional bias: polar residues. 2 consecutive transmembrane segments (helical) span residues 205-225 (LLLS…LYLL) and 264-284 (VLVG…AAFV).

To M.tuberculosis Rv0007.

The protein localises to the cell membrane. This is an uncharacterized protein from Mycobacterium leprae (strain TN).